The primary structure comprises 226 residues: Triosephosphate isomerase (226 aa).

H91 functions as the Electrophile in the catalytic mechanism. E163 serves as the catalytic Proton acceptor. Positions 169 and 207 each coordinate substrate.

This sequence belongs to the triosephosphate isomerase family. As to quaternary structure, homodimer.

It localises to the cytoplasm. The catalysed reaction is D-glyceraldehyde 3-phosphate = dihydroxyacetone phosphate. It functions in the pathway carbohydrate biosynthesis; gluconeogenesis. The protein operates within carbohydrate degradation; glycolysis; D-glyceraldehyde 3-phosphate from glycerone phosphate: step 1/1. Its function is as follows. Involved in the gluconeogenesis. Catalyzes stereospecifically the conversion of dihydroxyacetone phosphate (DHAP) to D-glyceraldehyde-3-phosphate (G3P). The protein is Triosephosphate isomerase of Rhizobium etli (strain ATCC 51251 / DSM 11541 / JCM 21823 / NBRC 15573 / CFN 42).